The primary structure comprises 28 residues: M-poneritoxin-Dq4b/U1-poneritoxin-Dq4c/U1-poneritoxin-Dq4d (28 aa).

At methionine 20 the chain carries Methionine sulfoxide; in form U1-PONTX-Dq4d. Alanine amide; in form Dq-1362 and U1-PONTX-Dq4d is present on alanine 28.

Occurs in 3 forms, M-PONTX-Dq4b has an amidated Ala-28, U1-PONTX-Dq4d has an amidated Ala-28 and an oxidized Met-20, U1-PONTX-Dq4c has no modifications at either Met-20 or Ala-28. As to expression, expressed by the venom gland.

The protein resides in the secreted. M-poneritoxin-Dq4b: this synthetic peptide has antimicrobial activity against Gram-positive bacteria B.amyloliquefacies S499 (MIC=0.1 mM), L.monocytogenes 2231 and S.aureus ATCC 29213, against Gram-negative bacteria P.putida BTP1, P.aeruginosa PaO1 and E.coli ATCC 10536, and against the fungi S.cerevisiae, R.mucilaginosa and C.cucumerinum. Not active against the fungi F.oxysporum and B.cinerea. This chain is M-poneritoxin-Dq4b/U1-poneritoxin-Dq4c/U1-poneritoxin-Dq4d, found in Dinoponera quadriceps (South American ant).